The following is a 206-amino-acid chain: Large ribosomal subunit protein uL4 (206 aa).

The disordered stretch occupies residues 65 to 85 (KQKGSGGARHGDRKAPQFRGG).

The protein belongs to the universal ribosomal protein uL4 family. As to quaternary structure, part of the 50S ribosomal subunit.

Its function is as follows. One of the primary rRNA binding proteins, this protein initially binds near the 5'-end of the 23S rRNA. It is important during the early stages of 50S assembly. It makes multiple contacts with different domains of the 23S rRNA in the assembled 50S subunit and ribosome. In terms of biological role, forms part of the polypeptide exit tunnel. This Parvibaculum lavamentivorans (strain DS-1 / DSM 13023 / NCIMB 13966) protein is Large ribosomal subunit protein uL4.